We begin with the raw amino-acid sequence, 288 residues long: Peroxisomal membrane protein pex13 (288 aa).

Residues 1-32 are disordered; sequence METNQNEKGPSLPSYPAGGIMSVSNSNADTNQ. Over residues 22–32 the composition is skewed to polar residues; that stretch reads SVSNSNADTNQ. A helical membrane pass occupies residues 178 to 198; it reads IYSIVSSLAIILGLVGLPYAI. An SH3 domain is found at 222–288; that stretch reads DSLEFCKADY…PSNYCSIISR (67 aa).

It belongs to the peroxin-13 family. Interacts (via SH3 domain) with PEX14 (via SH3-binding motif); forming the PEX13-PEX14 docking complex.

The protein localises to the peroxisome membrane. In terms of biological role, component of the PEX13-PEX14 docking complex, a translocon channel that specifically mediates the import of peroxisomal cargo proteins bound to PEX5 receptor. The PEX13-PEX14 docking complex forms a large import pore which can be opened to a diameter of about 9 nm. Mechanistically, PEX5 receptor along with cargo proteins associates with the PEX14 subunit of the PEX13-PEX14 docking complex in the cytosol, leading to the insertion of the receptor into the organelle membrane with the concomitant translocation of the cargo into the peroxisome matrix. The chain is Peroxisomal membrane protein pex13 (pex13) from Schizosaccharomyces pombe (strain 972 / ATCC 24843) (Fission yeast).